A 368-amino-acid polypeptide reads, in one-letter code: E3 ubiquitin-protein ligase ATL31 (368 aa).

The N-terminal stretch at 1 to 23 is a signal peptide; sequence MDPIKHISLPVLVLFLLLSVSAG. A helical membrane pass occupies residues 46-66; that stretch reads AVVVVVVIAALFFMGFFTVYI. The RING-type; atypical zinc finger occupies 124-166; sequence CAICLNEFEDDETLRLLPKCDHVFHPHCIGAWLQGHVTCPVCR. S247 carries the post-translational modification Phosphoserine. The disordered stretch occupies residues 342–368; that stretch reads NKDGEGTSSVQHIGTVGSTSGSLRLPV. Residues 347–368 are compositionally biased toward polar residues; sequence GTSSVQHIGTVGSTSGSLRLPV.

Belongs to the RING-type zinc finger family. ATL subfamily.

The protein resides in the membrane. The catalysed reaction is S-ubiquitinyl-[E2 ubiquitin-conjugating enzyme]-L-cysteine + [acceptor protein]-L-lysine = [E2 ubiquitin-conjugating enzyme]-L-cysteine + N(6)-ubiquitinyl-[acceptor protein]-L-lysine.. It functions in the pathway protein modification; protein ubiquitination. E3 ubiquitin-protein ligase that is required for the plant C/N response during seedling growth transition. May be involved in the early steps of the plant defense signaling pathway. The chain is E3 ubiquitin-protein ligase ATL31 (ATL31) from Arabidopsis thaliana (Mouse-ear cress).